Reading from the N-terminus, the 377-residue chain is Palmitoyltransferase PFA4 (377 aa).

Over 1–9 (MAIKLKNRW) the chain is Cytoplasmic. A helical membrane pass occupies residues 10 to 30 (LGVAIPAFLVALIGYGSHYFI). Topologically, residues 31-122 (LSNFLSWNEQ…NCVGHSNFPH (92 aa)) are lumenal. The 51-residue stretch at 78–128 (NYCKKCRVYKPERAHHCKTCNQCVLAMDHHCPWTLNCVGHSNFPHFMRFLF) folds into the DHHC domain. The active-site S-palmitoyl cysteine intermediate is cysteine 108. Residues 123–143 (FMRFLFWVIFSTAYLLFLLIG) traverse the membrane as a helical segment. Topologically, residues 144 to 163 (RIYLLWSIRHTAFHHRSTSE) are cytoplasmic. A helical membrane pass occupies residues 164–184 (IIFICIMTPMDAFVLLTVSSL). At 185–377 (LGRCIYNQCL…SDFGVDTELE (193 aa)) the chain is on the lumenal side.

The protein belongs to the DHHC palmitoyltransferase family. PFA4 subfamily.

The protein localises to the endoplasmic reticulum membrane. The enzyme catalyses L-cysteinyl-[protein] + hexadecanoyl-CoA = S-hexadecanoyl-L-cysteinyl-[protein] + CoA. Mediates the reversible addition of palmitate to target proteins, thereby regulating their membrane association and biological function. The chain is Palmitoyltransferase PFA4 from Kluyveromyces lactis (strain ATCC 8585 / CBS 2359 / DSM 70799 / NBRC 1267 / NRRL Y-1140 / WM37) (Yeast).